Reading from the N-terminus, the 509-residue chain is Aspartyl/glutamyl-tRNA(Asn/Gln) amidotransferase subunit B (509 aa).

It belongs to the GatB/GatE family. GatB subfamily. In terms of assembly, heterotrimer of A, B and C subunits.

It catalyses the reaction L-glutamyl-tRNA(Gln) + L-glutamine + ATP + H2O = L-glutaminyl-tRNA(Gln) + L-glutamate + ADP + phosphate + H(+). The enzyme catalyses L-aspartyl-tRNA(Asn) + L-glutamine + ATP + H2O = L-asparaginyl-tRNA(Asn) + L-glutamate + ADP + phosphate + 2 H(+). Its function is as follows. Allows the formation of correctly charged Asn-tRNA(Asn) or Gln-tRNA(Gln) through the transamidation of misacylated Asp-tRNA(Asn) or Glu-tRNA(Gln) in organisms which lack either or both of asparaginyl-tRNA or glutaminyl-tRNA synthetases. The reaction takes place in the presence of glutamine and ATP through an activated phospho-Asp-tRNA(Asn) or phospho-Glu-tRNA(Gln). This is Aspartyl/glutamyl-tRNA(Asn/Gln) amidotransferase subunit B from Psychrobacter cryohalolentis (strain ATCC BAA-1226 / DSM 17306 / VKM B-2378 / K5).